The primary structure comprises 401 residues: L-rhamnonate dehydratase (401 aa).

Substrate is bound by residues His-29 and Arg-55. Mg(2+) contacts are provided by Asp-222, Glu-248, and Glu-276. His-325 functions as the Proton acceptor in the catalytic mechanism. Glu-345 serves as a coordination point for substrate.

It belongs to the mandelate racemase/muconate lactonizing enzyme family. RhamD subfamily. As to quaternary structure, homooctamer; tetramer of dimers. Mg(2+) serves as cofactor.

The catalysed reaction is L-rhamnonate = 2-dehydro-3-deoxy-L-rhamnonate + H2O. Catalyzes the dehydration of L-rhamnonate to 2-keto-3-deoxy-L-rhamnonate (KDR). In Klebsiella pneumoniae (strain 342), this protein is L-rhamnonate dehydratase.